Here is a 451-residue protein sequence, read N- to C-terminus: Tubulin alpha-2 chain (451 aa).

Q11 contacts GTP. N6-acetyllysine is present on K40. E71, G144, T145, T179, N206, and N228 together coordinate GTP. E71 contributes to the Mg(2+) binding site. E254 is a catalytic residue.

It belongs to the tubulin family. Dimer of alpha and beta chains. A typical microtubule is a hollow water-filled tube with an outer diameter of 25 nm and an inner diameter of 15 nM. Alpha-beta heterodimers associate head-to-tail to form protofilaments running lengthwise along the microtubule wall with the beta-tubulin subunit facing the microtubule plus end conferring a structural polarity. Microtubules usually have 13 protofilaments but different protofilament numbers can be found in some organisms and specialized cells. It depends on Mg(2+) as a cofactor. In terms of processing, undergoes a tyrosination/detyrosination cycle, the cyclic removal and re-addition of a C-terminal tyrosine residue by the enzymes tubulin tyrosine carboxypeptidase (TTCP) and tubulin tyrosine ligase (TTL), respectively.

It is found in the cytoplasm. It localises to the cytoskeleton. It catalyses the reaction GTP + H2O = GDP + phosphate + H(+). Tubulin is the major constituent of microtubules, a cylinder consisting of laterally associated linear protofilaments composed of alpha- and beta-tubulin heterodimers. Microtubules grow by the addition of GTP-tubulin dimers to the microtubule end, where a stabilizing cap forms. Below the cap, tubulin dimers are in GDP-bound state, owing to GTPase activity of alpha-tubulin. This Chlamydomonas reinhardtii (Chlamydomonas smithii) protein is Tubulin alpha-2 chain (TUBA2).